Reading from the N-terminus, the 333-residue chain is Anthranilate phosphoribosyltransferase (333 aa).

Residues Gly-81, 84–85, Thr-89, 91–94, 109–117, and Ala-121 each bind 5-phospho-alpha-D-ribose 1-diphosphate; these read GD, NIST, and KHGNRSVSS. Gly-81 contributes to the anthranilate binding site. Mg(2+) is bound at residue Ser-93. An anthranilate-binding site is contributed by Asn-112. Residue Arg-167 coordinates anthranilate. 2 residues coordinate Mg(2+): Asp-225 and Glu-226.

It belongs to the anthranilate phosphoribosyltransferase family. Homodimer. It depends on Mg(2+) as a cofactor.

The enzyme catalyses N-(5-phospho-beta-D-ribosyl)anthranilate + diphosphate = 5-phospho-alpha-D-ribose 1-diphosphate + anthranilate. Its pathway is amino-acid biosynthesis; L-tryptophan biosynthesis; L-tryptophan from chorismate: step 2/5. Functionally, catalyzes the transfer of the phosphoribosyl group of 5-phosphorylribose-1-pyrophosphate (PRPP) to anthranilate to yield N-(5'-phosphoribosyl)-anthranilate (PRA). This Pasteurella multocida (strain Pm70) protein is Anthranilate phosphoribosyltransferase.